The sequence spans 107 residues: MSSRGKRKDEDVRASDDESETHAPAKKVAKPADDSDQSDDIVVCNISKNRRVSVRNWNGKIWIDIREFYVKDGKTLPGKKGISLSVDQWNTLRNHAEDIEKALSDLS.

Residues 1–40 are disordered; it reads MSSRGKRKDEDVRASDDESETHAPAKKVAKPADDSDQSDD. A compositionally biased stretch (basic and acidic residues) spans 7 to 23; sequence RKDEDVRASDDESETHA.

It belongs to the transcriptional coactivator PC4 family.

The protein localises to the nucleus. Functionally, general coactivator that functions cooperatively with TAFs and mediates functional interactions between upstream activators and the general transcriptional machinery. Binds single-stranded DNA. This is RNA polymerase II transcriptional coactivator KIWI (KIWI) from Arabidopsis thaliana (Mouse-ear cress).